A 251-amino-acid chain; its full sequence is Imidazole glycerol phosphate synthase subunit HisF (251 aa).

Catalysis depends on residues Asp11 and Asp130.

This sequence belongs to the HisA/HisF family. Heterodimer of HisH and HisF.

It is found in the cytoplasm. The catalysed reaction is 5-[(5-phospho-1-deoxy-D-ribulos-1-ylimino)methylamino]-1-(5-phospho-beta-D-ribosyl)imidazole-4-carboxamide + L-glutamine = D-erythro-1-(imidazol-4-yl)glycerol 3-phosphate + 5-amino-1-(5-phospho-beta-D-ribosyl)imidazole-4-carboxamide + L-glutamate + H(+). Its pathway is amino-acid biosynthesis; L-histidine biosynthesis; L-histidine from 5-phospho-alpha-D-ribose 1-diphosphate: step 5/9. IGPS catalyzes the conversion of PRFAR and glutamine to IGP, AICAR and glutamate. The HisF subunit catalyzes the cyclization activity that produces IGP and AICAR from PRFAR using the ammonia provided by the HisH subunit. The sequence is that of Imidazole glycerol phosphate synthase subunit HisF from Metallosphaera sedula (strain ATCC 51363 / DSM 5348 / JCM 9185 / NBRC 15509 / TH2).